The following is a 481-amino-acid chain: MRFSVFTAAIAAAFSACCATASPAVNYVNSLILQRADPHIVKHTDGWYYFTATVPEYDRIVLRRAQTIQGLQSAPETVIWRRKAFGVGSGQVWAPELHYIDGRWYIYVALGVSGQWRIRAFVLEGVGANPLTASWTEKGIIQTNWDTFSLDATTFVANGTRYLVWAQQDPSRNGENSSLFIAPLQNPWTIRGPAVAISHPDLSWERIGYKVNEGPAVIQRNGRIFLTYSASATDHNYCMGLLTARADANLMNPASWVKSQQPIFVSNAATNQWGPGHNQFTVSEDGLSDILVYHDRGYRDINGDPLNDPNRRTRVQKLYWRDDGTPDFGIPVPDGPTPVRLRVAANGASSNGAYVRFYTTTGSGNLTGTAALPDTQFKLVSPGLSGGDSVSLESTSNPGTYVRRVSGSTAVQFERGTALNTAALRASASFRRVPGLSDSGGAVSFESVESPGQYLRLDPNGRLSVASVAEGTQGRSTFYLE.

A signal peptide spans 1–19; that stretch reads MRFSVFTAAIAAAFSACCA. N-linked (GlcNAc...) asparagine glycans are attached at residues N158, N176, and N365.

Belongs to the glycosyl hydrolase 43 family.

It localises to the secreted. It carries out the reaction Hydrolysis of terminal non-reducing alpha-L-arabinofuranoside residues in alpha-L-arabinosides.. Activity is significantly inhibited by SDS and partially inhibited by Ag(+), Fe(3+) and beta-mercaptoethanol. In terms of biological role, alpha-L-arabinofuranosidase specific for the cleavage of alpha-1,3-linkage. Shows high activity against 4-nitrophenyl alpha-L-arabinofuranoside, debranched arabinan, and sugar beet arabinan. The protein is Alpha-L-arabinofuranosidase 43 of Humicola insolens (Soft-rot fungus).